A 691-amino-acid chain; its full sequence is Cyclic nucleotide-gated channel alpha-1 (691 aa).

Topologically, residues 1 to 168 are cytoplasmic; the sequence is MKKNIINTWY…PAGNMYYNWL (168 aa). Positions 31–151 are disordered; sequence ENGARSSFSD…KGKDKKEEEK (121 aa). Acidic residues predominate over residues 39–56; that stretch reads SDDDGDDDSASMFEESEN. Composition is skewed to basic and acidic residues over residues 57-76 and 112-151; these read ETPH…DPSQ and SKSG…EEEK. Residues 169-190 traverse the membrane as a helical segment; that stretch reads FCITLPVMYNWTMVIARACFDE. Over 191 to 200 the chain is Extracellular; it reads LQSDYLEYWI. Residues 201–221 traverse the membrane as a helical segment; sequence IFDYLSDIVYLLDMFVRTRTG. Residues 222–246 lie on the Cytoplasmic side of the membrane; the sequence is YLEQGLLVREEAKLIEKYKSNLQFK. A helical membrane pass occupies residues 247 to 265; that stretch reads LDFLSVIPTDLLYFKLGWN. Topologically, residues 266-270 are extracellular; that stretch reads YPEIR. Residues 271 to 289 traverse the membrane as a helical segment; the sequence is LNRLLRISRMFEFFQRTET. At 290–296 the chain is on the cytoplasmic side; sequence RTNYPNI. Residues 294-402 are ion conduction pathway; the sequence is PNIFRISNLV…GNIGSMISNM (109 aa). The chain crosses the membrane as a helical span at residues 297 to 320; that stretch reads FRISNLVMYIVIIIHWNACVYFSI. Topologically, residues 321–343 are extracellular; that stretch reads SKAIGFGNDTWVYPDVNDPEFGR. An N-linked (GlcNAc...) asparagine glycan is attached at asparagine 328. 2 consecutive transmembrane segments (helical) span residues 344–378 and 379–403; these read LARK…VFVV and VDFL…SNMN. The segment at 361 to 364 is selectivity filter; sequence TIGE. Residues 404–480 form a C-linker region; that stretch reads AARAEFQARI…DTLKKVRIFA (77 aa). The Cytoplasmic segment spans residues 404–691; that stretch reads AARAEFQARI…ESRPLDSTQD (288 aa). A cyclic nucleotide-binding domain region spans residues 484–604; sequence AGLLVELVLK…EEKGKQILMK (121 aa). Glycine 544, serine 547, arginine 560, and threonine 561 together coordinate 3',5'-cyclic GMP. 3',5'-cyclic AMP is bound by residues arginine 560 and threonine 561. The stretch at 622–676 forms a coiled coil; sequence LEEKVTRMEGSVDLLQTRFARILAEYESMQQKLKQRLTKVERFLKPIIDTEFSAL.

The protein belongs to the cyclic nucleotide-gated cation channel (TC 1.A.1.5) family. CNGA1 subfamily. As to quaternary structure, forms heterotetrameric channels composed of CNGA1 and CNGB1 subunits with 3:1 stoichiometry. May also form cyclic nucleotide-activated homotetrameric channels, that are efficiently activated by saturating cGMP, but poorly activated by saturating cAMP compared to the heterotetramer with CNGB1. The channel binds Ca(2+)-bound CALM1 via CaM1 and CaM2 regions of the CNGB1 subunit; this interaction modulates the affinity of the channel for cNMPs in response to intracellular Ca(2+) levels.

The protein resides in the cell membrane. It carries out the reaction Ca(2+)(in) = Ca(2+)(out). It catalyses the reaction Na(+)(in) = Na(+)(out). The catalysed reaction is K(+)(in) = K(+)(out). The enzyme catalyses NH4(+)(in) = NH4(+)(out). It carries out the reaction Rb(+)(in) = Rb(+)(out). It catalyses the reaction Li(+)(in) = Li(+)(out). The catalysed reaction is Cs(+)(in) = Cs(+)(out). Its function is as follows. Pore-forming subunit of the rod cyclic nucleotide-gated channel. Mediates rod photoresponses at dim light converting transient changes in intracellular cGMP levels into electrical signals. In the dark, cGMP levels are high and keep the channel open enabling a steady inward current carried by Na(+) and Ca(2+) ions that leads to membrane depolarization and neurotransmitter release from synaptic terminals. Upon photon absorption cGMP levels decline leading to channel closure and membrane hyperpolarization that ultimately slows neurotransmitter release and signals the presence of light, the end point of the phototransduction cascade. Conducts cGMP- and cAMP-gated ion currents, with permeability for monovalent and divalent cations. The selectivity for Ca(2+) over Na(+) increases with cGMP concentrations, whereas the selectivity among monovalent ions is independent of the cGMP levels. This is Cyclic nucleotide-gated channel alpha-1 from Canis lupus familiaris (Dog).